Reading from the N-terminus, the 20-residue chain is DELTA-actitoxin-Afr1b (20 aa).

This sequence belongs to the actinoporin family. Sea anemone subfamily. Octamer or nonamer in membranes. Monomer in the soluble state.

It is found in the secreted. It localises to the nematocyst. The protein resides in the target cell membrane. Functionally, pore-forming toxin (PFT) that consists of a crown-shaped octamer or nonamer that forms cation-selective hydrophilic pores of about 1.5 nm (inside) and 13 nm (outside) and causes cytolysis. It causes cardiac stimulation. Also causes hemolysis (HC(50)=0.4 nM). Interestingly, the Phe-16 is crucial for hemolysis. Pore formation is a multi-step process that involves specific recognition of membrane sphingomyelin (but neither cholesterol nor phosphatidylcholine) using aromatic rich region and adjacent phosphocholine (POC) binding site, firm binding to the membrane (mainly driven by hydrophobic interactions) accompanied by the transfer of the N-terminal region to the lipid-water interface and finally pore formation after oligomerization of monomers. It is probable that a dimeric form is an assembly intermediate before the complete oligomerization. The formation of stable pores occurs only in vesicles composed of DOPC/SM (there is no oligomerization when the PFT is treated with vesicles of DOPC or SM alone). The transmembrane pore displays 8 lateral perforations, one at each subunit-subunit interface, partially occupied by the acyl-chain region of a bridging lipid. Each pore contains 24 lipid molecules, firmly bound to each subunit, that is, 3 lipids (L1, L2, L3, L4 and/or L5) are associated to each subunit. Lipid L1 bridges 2 subunits, whereas lipids L2 and L3 bind to sites at single subunit. The protein is DELTA-actitoxin-Afr1b of Actinia fragacea (Strawberry anemone).